The chain runs to 530 residues: Hyalin (530 aa).

HYR domains follow at residues 1–66, 67–150, 151–234, 235–319, 320–403, 404–486, and 487–530; these read NVEI…TVTA, TDSI…NVVE, VDTT…NVVE, VDTT…NIVE, EDTT…TVNT, and VDTT…ASLV.

Homooligomer in presence of calcium. Post-translationally, glycosylated.

It is found in the secreted. The protein resides in the extracellular space. The protein localises to the extracellular matrix. Its function is as follows. Major constituent of the hyaline layer. The hyaline layer of echinoderm embryos is an extraembryonic matrix that functions as a substrate for cell adhesion through early development. The polypeptide is Hyalin (Lytechinus variegatus (Green sea urchin)).